The chain runs to 126 residues: Small ribosomal subunit protein bS6 (126 aa).

The segment at 99 to 126 is disordered; that stretch reads PLPAPRVVPGTEAPEPAQAAETPEPEAS. The span at 107–120 shows a compositional bias: low complexity; sequence PGTEAPEPAQAAET.

The protein belongs to the bacterial ribosomal protein bS6 family.

Binds together with bS18 to 16S ribosomal RNA. The chain is Small ribosomal subunit protein bS6 from Synechococcus sp. (strain CC9902).